A 277-amino-acid chain; its full sequence is 2,5-diketo-D-gluconic acid reductase B (277 aa).

Catalysis depends on Tyr-51, which acts as the Proton donor. His-109 is a substrate binding site. Ser-189 to Asn-242 is an NADP(+) binding site.

It belongs to the aldo/keto reductase family.

The protein localises to the cytoplasm. It catalyses the reaction 2-dehydro-D-gluconate + NADP(+) = 2,5-didehydro-D-gluconate + NADPH + H(+). In terms of biological role, catalyzes the reduction of 2,5-diketo-D-gluconic acid (25DKG) to 2-keto-L-gulonic acid (2KLG). 25DKGR-B has higher catalytic efficiency than 25DKGR-A. The sequence is that of 2,5-diketo-D-gluconic acid reductase B (dkgB) from Corynebacterium sp. (strain SHS752001).